The primary structure comprises 356 residues: Leucoanthocyanidin dioxygenase (356 aa).

2 residues coordinate substrate: Y142 and K213. In terms of domain architecture, Fe2OG dioxygenase spans 208 to 307 (LLLQMKINYY…RISWAVFCEP (100 aa)). 215–217 (NYY) contacts 2-oxoglutarate. H232 lines the Fe cation pocket. T233 serves as a coordination point for substrate. Positions 234 and 288 each coordinate Fe cation. 298–300 (RIS) contributes to the 2-oxoglutarate binding site. Residues E306 and K341 each contribute to the substrate site.

This sequence belongs to the iron/ascorbate-dependent oxidoreductase family. Requires L-ascorbate as cofactor. Fe(2+) serves as cofactor. As to expression, expressed in young seedlings (at protein level).

The catalysed reaction is a (2R,3S,4S)-leucoanthocyanidin + 2-oxoglutarate + O2 = a 4-H-anthocyanidin with a 3-hydroxy group + succinate + CO2 + 2 H2O. The enzyme catalyses (2R,3S,4S)-3,4-leucopelargonidin + 2-oxoglutarate + O2 = (4S)-2,3-dehydroleucopelargonidin + succinate + CO2 + H2O + H(+). It carries out the reaction (2R,3S,4S)-leucocyanidin + 2-oxoglutarate + O2 = (4S)-2,3-dehydroleucocyanidin + succinate + CO2 + H2O + H(+). It functions in the pathway pigment biosynthesis; anthocyanin biosynthesis. Functionally, involved in anthocyanin and protoanthocyanidin biosynthesis by catalyzing the oxidation of leucoanthocyanidins into anthocyanidins. Possesses low flavonol synthase activity in vitro towards dihydrokaempferol and dihydroquercetin producing kaempferol and quercitin, respectively. The protein is Leucoanthocyanidin dioxygenase (LDOX) of Arabidopsis thaliana (Mouse-ear cress).